The following is a 102-amino-acid chain: Protein YcgL (102 aa).

In terms of domain architecture, YcgL spans 14–98; that stretch reads MFCVIYRSSK…PPEDLLKQHL (85 aa).

The protein is Protein YcgL of Salmonella agona (strain SL483).